The chain runs to 37 residues: Protamine Z3 (37 aa).

The disordered stretch occupies residues 1-37 (ARSRSRRSYGRGRRRGGRRRRRRRRRRRGGRRGRRSR).

In terms of tissue distribution, testis.

Its subcellular location is the nucleus. The protein resides in the chromosome. In terms of biological role, protamines substitute for histones in the chromatin of sperm during the haploid phase of spermatogenesis. They compact sperm DNA into a highly condensed, stable and inactive complex. The sequence is that of Protamine Z3 from Scyliorhinus canicula (Small-spotted catshark).